The primary structure comprises 353 residues: Guanidino acid hydrolase, mitochondrial (353 aa).

Residues 1–33 (MLQLLKSSWVRSAGSGVVTWRASAGLFCPGTRQ) constitute a mitochondrion transit peptide. The segment at 29-52 (PGTRQASDTSDTLHHPSPSSESQV) is disordered. Residues histidine 163 and histidine 188 each coordinate Mn(2+). An N6-acetyllysine modification is found at lysine 194. Lysine 218 is modified (N6-acetyllysine; alternate). An N6-succinyllysine; alternate modification is found at lysine 218. Aspartate 279 contacts Mn(2+).

This sequence belongs to the arginase family. Agmatinase subfamily. Requires Mn(2+) as cofactor.

The protein resides in the mitochondrion. The catalysed reaction is 3-guanidinopropanoate + H2O = urea + beta-alanine. It carries out the reaction 4-guanidinobutanoate + H2O = urea + 4-aminobutanoate. The enzyme catalyses taurocyamine + H2O = urea + taurine. It catalyses the reaction L-arginine + H2O = urea + L-ornithine. It functions in the pathway nitrogen metabolism; urea cycle; L-ornithine and urea from L-arginine: step 1/1. In terms of biological role, hydrolyzes linear guanidino acids to form urea and the corresponding amines. Displays specificity for substrates having a negatively charged head group and short chains including taurocyamine, guanidino propanoic and butanoic acids. May protect cells by detoxifying potentially harmful amounts of guanidino acids. Metabolizes L-arginine with low efficiency. The polypeptide is Guanidino acid hydrolase, mitochondrial (Agmat) (Rattus norvegicus (Rat)).